Consider the following 429-residue polypeptide: Histidine--tRNA ligase (429 aa).

It belongs to the class-II aminoacyl-tRNA synthetase family. As to quaternary structure, homodimer.

Its subcellular location is the cytoplasm. The catalysed reaction is tRNA(His) + L-histidine + ATP = L-histidyl-tRNA(His) + AMP + diphosphate + H(+). This is Histidine--tRNA ligase from Streptococcus pneumoniae serotype 4 (strain ATCC BAA-334 / TIGR4).